A 320-amino-acid polypeptide reads, in one-letter code: Formimidoylglutamase (320 aa).

His125, Asp153, His155, Asp157, Asp244, and Asp246 together coordinate Mn(2+).

Belongs to the arginase family. Requires Mn(2+) as cofactor.

The catalysed reaction is N-formimidoyl-L-glutamate + H2O = formamide + L-glutamate. It functions in the pathway amino-acid degradation; L-histidine degradation into L-glutamate; L-glutamate from N-formimidoyl-L-glutamate (hydrolase route): step 1/1. In terms of biological role, catalyzes the conversion of N-formimidoyl-L-glutamate to L-glutamate and formamide. This chain is Formimidoylglutamase, found in Rhodococcus opacus (strain B4).